The following is a 78-amino-acid chain: Putative DNA-binding protein MT0521 (78 aa).

Residues 24-45 constitute a DNA-binding region (H-T-H motif); the sequence is LLTVAEVAALMRVSKMTVYRLV.

This Mycobacterium tuberculosis (strain CDC 1551 / Oshkosh) protein is Putative DNA-binding protein MT0521.